The sequence spans 595 residues: Guanylate-binding protein 3 (595 aa).

Residues 1–309 are GTPase domain (Globular); that stretch reads MAPEIHMTGP…NAISRGDLPC (309 aa). The 242-residue stretch at 35–276 folds into the GB1/RHD3-type G domain; that stretch reads TQPVVVVAIV…FCSYIFSNSK (242 aa). Residues 45–52, 67–69, and 97–101 contribute to the GTP site; these read GLYRTGKS, LGS, and DTEGL. Positions 482–595 form a coiled coil; it reads EKEKEIEVEC…KRYMSHKLKI (114 aa).

This sequence belongs to the TRAFAC class dynamin-like GTPase superfamily. GB1/RHD3 GTPase family. GB1 subfamily. As to quaternary structure, heterodimer with other family members, including GBP1, GBP2 and GBP5. Dimerization regulates subcellular location.

It is found in the cytoplasm. The protein resides in the perinuclear region. The protein localises to the golgi apparatus membrane. It carries out the reaction GTP + H2O = GDP + phosphate + H(+). In terms of biological role, interferon (IFN)-inducible GTPase that plays important roles in innate immunity against a diverse range of bacterial, viral and protozoan pathogens. Hydrolyzes GTP very efficiently; GDP rather than GMP is the major reaction product. Following infection, recruited to the pathogen-containing vacuoles or vacuole-escaped bacteria and acts as a positive regulator of inflammasome assembly by promoting the release of inflammasome ligands from bacteria. Acts by promoting lysis of pathogen-containing vacuoles, releasing pathogens into the cytosol. Following pathogen release in the cytosol, promotes recruitment of proteins that mediate bacterial cytolysis: this liberates ligands that are detected by inflammasomes, such as lipopolysaccharide (LPS) that activates the non-canonical CASP4/CASP11 inflammasome or double-stranded DNA (dsDNA) that activates the AIM2 inflammasome. Exhibits antiviral activity against influenza virus. Functionally, shows the most prominent antiviral activity in epithelial cells. The sequence is that of Guanylate-binding protein 3 (GBP3) from Homo sapiens (Human).